Here is a 284-residue protein sequence, read N- to C-terminus: Bifunctional protein FolD (284 aa).

NADP(+) contacts are provided by residues 165–167 and serine 190; that span reads GRS.

Belongs to the tetrahydrofolate dehydrogenase/cyclohydrolase family. In terms of assembly, homodimer.

It carries out the reaction (6R)-5,10-methylene-5,6,7,8-tetrahydrofolate + NADP(+) = (6R)-5,10-methenyltetrahydrofolate + NADPH. The enzyme catalyses (6R)-5,10-methenyltetrahydrofolate + H2O = (6R)-10-formyltetrahydrofolate + H(+). The protein operates within one-carbon metabolism; tetrahydrofolate interconversion. Catalyzes the oxidation of 5,10-methylenetetrahydrofolate to 5,10-methenyltetrahydrofolate and then the hydrolysis of 5,10-methenyltetrahydrofolate to 10-formyltetrahydrofolate. This chain is Bifunctional protein FolD, found in Streptococcus sanguinis (strain SK36).